The chain runs to 411 residues: Multifunctional CCA protein (411 aa).

Gly-8 and Arg-11 together coordinate ATP. CTP contacts are provided by Gly-8 and Arg-11. Mg(2+) is bound by residues Asp-21 and Asp-23. Arg-91, Arg-137, and Arg-140 together coordinate ATP. 3 residues coordinate CTP: Arg-91, Arg-137, and Arg-140. One can recognise an HD domain in the interval 226–327; it reads TGVHVMLVID…LRFLQETDAL (102 aa).

This sequence belongs to the tRNA nucleotidyltransferase/poly(A) polymerase family. Bacterial CCA-adding enzyme type 1 subfamily. As to quaternary structure, monomer. Can also form homodimers and oligomers. Mg(2+) serves as cofactor. Requires Ni(2+) as cofactor.

The enzyme catalyses a tRNA precursor + 2 CTP + ATP = a tRNA with a 3' CCA end + 3 diphosphate. It carries out the reaction a tRNA with a 3' CCA end + 2 CTP + ATP = a tRNA with a 3' CCACCA end + 3 diphosphate. In terms of biological role, catalyzes the addition and repair of the essential 3'-terminal CCA sequence in tRNAs without using a nucleic acid template. Adds these three nucleotides in the order of C, C, and A to the tRNA nucleotide-73, using CTP and ATP as substrates and producing inorganic pyrophosphate. tRNA 3'-terminal CCA addition is required both for tRNA processing and repair. Also involved in tRNA surveillance by mediating tandem CCA addition to generate a CCACCA at the 3' terminus of unstable tRNAs. While stable tRNAs receive only 3'-terminal CCA, unstable tRNAs are marked with CCACCA and rapidly degraded. The polypeptide is Multifunctional CCA protein (Methylobacillus flagellatus (strain ATCC 51484 / DSM 6875 / VKM B-1610 / KT)).